A 384-amino-acid polypeptide reads, in one-letter code: S-adenosylmethionine synthase (384 aa).

Position 15 (histidine 15) interacts with ATP. Aspartate 17 serves as a coordination point for Mg(2+). Glutamate 43 provides a ligand contact to K(+). Residues glutamate 56 and glutamine 99 each coordinate L-methionine. The segment at 99–109 (QSPDINQGVDR) is flexible loop. ATP contacts are provided by residues 164-166 (DAK), 231-232 (RF), aspartate 240, 246-247 (RK), alanine 263, and lysine 267. Residue aspartate 240 coordinates L-methionine. Lysine 271 provides a ligand contact to L-methionine.

The protein belongs to the AdoMet synthase family. Homotetramer; dimer of dimers. Mg(2+) serves as cofactor. K(+) is required as a cofactor.

The protein localises to the cytoplasm. It catalyses the reaction L-methionine + ATP + H2O = S-adenosyl-L-methionine + phosphate + diphosphate. It functions in the pathway amino-acid biosynthesis; S-adenosyl-L-methionine biosynthesis; S-adenosyl-L-methionine from L-methionine: step 1/1. Its function is as follows. Catalyzes the formation of S-adenosylmethionine (AdoMet) from methionine and ATP. The overall synthetic reaction is composed of two sequential steps, AdoMet formation and the subsequent tripolyphosphate hydrolysis which occurs prior to release of AdoMet from the enzyme. This Shewanella piezotolerans (strain WP3 / JCM 13877) protein is S-adenosylmethionine synthase.